Reading from the N-terminus, the 371-residue chain is Aspartate-semialdehyde dehydrogenase (371 aa).

NADP(+) contacts are provided by residues 9 to 12, 37 to 38, and Gln-73; these read RGMV and TS. Arg-102 contributes to the phosphate binding site. Cys-135 functions as the Acyl-thioester intermediate in the catalytic mechanism. Gln-162 is a substrate binding site. Residues 165–166 and Pro-193 each bind NADP(+); that span reads SG. Glu-241 lines the substrate pocket. Lys-244 is a phosphate binding site. Position 268 (Arg-268) interacts with substrate. His-275 serves as the catalytic Proton acceptor. Gln-351 provides a ligand contact to NADP(+).

It belongs to the aspartate-semialdehyde dehydrogenase family. In terms of assembly, homodimer.

It carries out the reaction L-aspartate 4-semialdehyde + phosphate + NADP(+) = 4-phospho-L-aspartate + NADPH + H(+). It functions in the pathway amino-acid biosynthesis; L-lysine biosynthesis via DAP pathway; (S)-tetrahydrodipicolinate from L-aspartate: step 2/4. The protein operates within amino-acid biosynthesis; L-methionine biosynthesis via de novo pathway; L-homoserine from L-aspartate: step 2/3. It participates in amino-acid biosynthesis; L-threonine biosynthesis; L-threonine from L-aspartate: step 2/5. In terms of biological role, catalyzes the NADPH-dependent formation of L-aspartate-semialdehyde (L-ASA) by the reductive dephosphorylation of L-aspartyl-4-phosphate. The protein is Aspartate-semialdehyde dehydrogenase of Neisseria meningitidis serogroup A / serotype 4A (strain DSM 15465 / Z2491).